The chain runs to 403 residues: MAEKSTKNETALLVAQSAKSALQDFNHTYSKSWTFGDKWDNSNTMFETFVNKFLFPKINETLLIDIALGNRFNWLAKEQDFIGQYSEEYVIMDTVPINMDLSKNEELMLKRNYPRMATKLYGSGIVKKQKFTLNNNDTRFNFQTLADATNYALGVYKKKISDINVLEEKEMRAMLVDYSLNQLSESNVRKATSKEDLASKVFEAILNLQNNSAKYNEVHRASGGAIGQYTTVSKLKDIVILTTDSLKSYLLDTKIANTFQVAGIDFTDHVISFDDLGGVFKVTKDIVVSSDESVNFLRAYGDYQTHKGDTIPVGSVFTYDVSKLSEFKDSVEEIKPKSDLYAFILDINSIKYKRYTKGMLKQPFYNGEFDEVTHWIHYYSFKAISPFFNKILITDQDVTPRTE.

The protein resides in the virion. Functionally, assembles to form an icosahedral capsid. In Staphylococcus phage S24-1, this protein is Major capsid protein.